The following is a 308-amino-acid chain: MESGDQAGETSKKKKKGPYMSWSDQECYELTAILVDAIKRGWRDKNGTISKTTVERKILPLLNKKFKCNKTYTNYLSRMKSMKKEYSVYAALFWFSSGFGWDPITKQFTAPDDVWAAYLMGHPNHHHMRTSTFEDFEDLQLIFESAIAKGNNAFGLGGDSNAETFEEEDDLQAGDNVNHMEINDDEVNETLPKEKLPTRKRSKTNRNGDRSDSINHGESSEKVLSEMIGVGTNIINLIQQREERHQREVEFRETEKKKNNVWDAIKEIPDLEDHIRYDAVTKIHTLNLKDVFVSMSVEERLGWIRRNT.

The tract at residues 158–221 (GDSNAETFEE…DSINHGESSE (64 aa)) is disordered. The span at 206–221 (RNGDRSDSINHGESSE) shows a compositional bias: basic and acidic residues.

This is an uncharacterized protein from Arabidopsis thaliana (Mouse-ear cress).